We begin with the raw amino-acid sequence, 136 residues long: UPF0216 protein PH0358 (136 aa).

This sequence belongs to the UPF0216 family.

The chain is UPF0216 protein PH0358 from Pyrococcus horikoshii (strain ATCC 700860 / DSM 12428 / JCM 9974 / NBRC 100139 / OT-3).